The primary structure comprises 305 residues: Small ribosomal subunit protein uS3 (305 aa).

A KH type-2 domain is found at 17–86; sequence IDEFFSEELS…DPQVDVQEVD (70 aa). Acidic residues-rich tracts occupy residues 207–262 and 272–305; these read EPEG…EAET and AAEE…EEET. A disordered region spans residues 207 to 305; that stretch reads EPEGDVEELL…EDETTDEEET (99 aa).

Belongs to the universal ribosomal protein uS3 family. As to quaternary structure, part of the 30S ribosomal subunit.

Functionally, binds the lower part of the 30S subunit head. This is Small ribosomal subunit protein uS3 from Natronomonas pharaonis (strain ATCC 35678 / DSM 2160 / CIP 103997 / JCM 8858 / NBRC 14720 / NCIMB 2260 / Gabara) (Halobacterium pharaonis).